A 156-amino-acid polypeptide reads, in one-letter code: Ribosome maturation factor RimP (156 aa).

It belongs to the RimP family.

It is found in the cytoplasm. Its function is as follows. Required for maturation of 30S ribosomal subunits. The polypeptide is Ribosome maturation factor RimP (Bacillus cereus (strain G9842)).